The following is a 122-amino-acid chain: Large ribosomal subunit protein bL12 (122 aa).

The protein belongs to the bacterial ribosomal protein bL12 family. In terms of assembly, homodimer. Part of the ribosomal stalk of the 50S ribosomal subunit. Forms a multimeric L10(L12)X complex, where L10 forms an elongated spine to which 2 to 4 L12 dimers bind in a sequential fashion. Binds GTP-bound translation factors.

In terms of biological role, forms part of the ribosomal stalk which helps the ribosome interact with GTP-bound translation factors. Is thus essential for accurate translation. The sequence is that of Large ribosomal subunit protein bL12 from Levilactobacillus brevis (strain ATCC 367 / BCRC 12310 / CIP 105137 / JCM 1170 / LMG 11437 / NCIMB 947 / NCTC 947) (Lactobacillus brevis).